The sequence spans 520 residues: MLARGLALRSVLVKGCQPFLSAPRECPGHPRVGTGEGACISTKTPRPFSEIPSPGDNGWINLYRFWKEKGTQKIHYHHVQNFQKYGPIYREKLGNLESVYIIDPEDVALLFKFEGPNPERYNIPPWVAYHQHYQKPVGVLLKKSGAWKKDRLVLNTEVMAPEAIKNFIPLLDTVSQDFVGVLHRRIKQQGSGKFSGDIREDLFRFAFESITNVIFGERLGMLEEIVDPEAQKFIDAVYQMFHTSVPMLNLPPDLFRLFRTKTWRDHVAAWDTIFNKAEKYTQNFYWDLRRKREFNNYPGILYRLLGNDKLLSEDVKANVTEMLAGGVDTTSMTLQWHLYEMARSLNVQEMLREEVLNARRQAQGDTSKMLQLVPLLKASIKETLRLHPISVTLQRYLVNDLVLRDYMIPAKTLVQVAVYAMGRDPAFFSNPGQFDPTRWLGKERDLIHFRNLGFGWGVRQCVGRRIAELEMTLFLIHILENFKVELQHFSDVDTIFNLILMPDKPIFLVFRPFNQDPLQA.

The transit peptide at 1–39 (MLARGLALRSVLVKGCQPFLSAPRECPGHPRVGTGEGAC) directs the protein to the mitochondrion. Residue cysteine 461 coordinates heme.

It belongs to the cytochrome P450 family. In terms of assembly, interacts with FDX1/adrenodoxin. It depends on heme as a cofactor.

The protein localises to the mitochondrion inner membrane. The enzyme catalyses 6 reduced [adrenodoxin] + cholesterol + 3 O2 + 6 H(+) = 4-methylpentanal + pregnenolone + 6 oxidized [adrenodoxin] + 4 H2O. The catalysed reaction is 2 reduced [adrenodoxin] + cholesterol + O2 + 2 H(+) = (22R)-hydroxycholesterol + 2 oxidized [adrenodoxin] + H2O. It carries out the reaction (22R)-hydroxycholesterol + 2 reduced [adrenodoxin] + O2 + 2 H(+) = (20R,22R)-20,22-dihydroxycholesterol + 2 oxidized [adrenodoxin] + H2O. It catalyses the reaction (20R,22R)-20,22-dihydroxycholesterol + 2 reduced [adrenodoxin] + O2 + 2 H(+) = 4-methylpentanal + pregnenolone + 2 oxidized [adrenodoxin] + 2 H2O. It functions in the pathway lipid metabolism; C21-steroid hormone metabolism. It participates in steroid metabolism; cholesterol metabolism. Functionally, a cytochrome P450 monooxygenase that catalyzes the side-chain hydroxylation and cleavage of cholesterol to pregnenolone, the precursor of most steroid hormones. Catalyzes three sequential oxidation reactions of cholesterol, namely the hydroxylation at C22 followed with the hydroxylation at C20 to yield 20R,22R-hydroxycholesterol that is further cleaved between C20 and C22 to yield the C21-steroid pregnenolone and 4-methylpentanal. Mechanistically, uses molecular oxygen inserting one oxygen atom into a substrate and reducing the second into a water molecule. Two electrons are provided by NADPH via a two-protein mitochondrial transfer system comprising flavoprotein FDXR (adrenodoxin/ferredoxin reductase) and nonheme iron-sulfur protein FDX1 or FDX2 (adrenodoxin/ferredoxin). The sequence is that of Cholesterol side-chain cleavage enzyme, mitochondrial (CYP11A1) from Sus scrofa (Pig).